Consider the following 370-residue polypeptide: Adaptive-response sensory kinase SasA (370 aa).

The Histidine kinase domain maps to 152–365; sequence MVAHELRTPL…CFYLTVPVWQ (214 aa). His-155 bears the Phosphohistidine; by autocatalysis mark.

Homooligomerizes. Interacts with KaiC. Participates in the KaiBC complex, whose core is composed of a KaiC homohexamer and 6 KaiB.

It carries out the reaction ATP + protein L-histidine = ADP + protein N-phospho-L-histidine.. Its function is as follows. Member of the two-component regulatory system SasA/RpaA involved in genome-wide circadian gene expression. One of several clock output pathways. Participates in the Kai clock protein complex, the main circadian regulator in cyanobacteria, via its interaction with KaiC. KaiC enhances the autophosphorylation activity of SasA, which then transfers its phosphate group to RpaA to activate it. In addition to its output function, recruits fold-shifted KaiB (KaiB(fs)) to KaiC to cooperatively form the KaiB(6):KaiC(6) complex (independent of SasA kinase activity). Required for robustness of the circadian rhythm of gene expression and is involved in clock output, also required for adaptation to light/dark cycles. The sequence is that of Adaptive-response sensory kinase SasA from Prochlorococcus marinus (strain MIT 9303).